The sequence spans 213 residues: Orotate phosphoribosyltransferase (213 aa).

5-phospho-alpha-D-ribose 1-diphosphate is bound at residue Lys-26. 34–35 (FF) contributes to the orotate binding site. 5-phospho-alpha-D-ribose 1-diphosphate is bound by residues 72–73 (YK), Arg-99, Lys-100, Lys-103, His-105, and 124–132 (DDVITAGTA). Residues Thr-128 and Arg-156 each contribute to the orotate site.

Belongs to the purine/pyrimidine phosphoribosyltransferase family. PyrE subfamily. In terms of assembly, homodimer. Requires Mg(2+) as cofactor.

It carries out the reaction orotidine 5'-phosphate + diphosphate = orotate + 5-phospho-alpha-D-ribose 1-diphosphate. It functions in the pathway pyrimidine metabolism; UMP biosynthesis via de novo pathway; UMP from orotate: step 1/2. Functionally, catalyzes the transfer of a ribosyl phosphate group from 5-phosphoribose 1-diphosphate to orotate, leading to the formation of orotidine monophosphate (OMP). The sequence is that of Orotate phosphoribosyltransferase from Cronobacter sakazakii (strain ATCC BAA-894) (Enterobacter sakazakii).